We begin with the raw amino-acid sequence, 204 residues long: Large ribosomal subunit protein uL4 (204 aa).

The interval 49 to 75 (TKGRSDVSGGGKKPWRQKGRGGARAGS) is disordered.

Belongs to the universal ribosomal protein uL4 family. As to quaternary structure, part of the 50S ribosomal subunit.

One of the primary rRNA binding proteins, this protein initially binds near the 5'-end of the 23S rRNA. It is important during the early stages of 50S assembly. It makes multiple contacts with different domains of the 23S rRNA in the assembled 50S subunit and ribosome. Its function is as follows. Forms part of the polypeptide exit tunnel. In Campylobacter lari (strain RM2100 / D67 / ATCC BAA-1060), this protein is Large ribosomal subunit protein uL4.